The chain runs to 264 residues: Thymidylate synthase (264 aa).

Arg-21 contributes to the dUMP binding site. Residue His-51 coordinates (6R)-5,10-methylene-5,6,7,8-tetrahydrofolate. 126–127 (RR) is a dUMP binding site. Catalysis depends on Cys-146, which acts as the Nucleophile. DUMP-binding positions include 166 to 169 (RSAD), Asn-177, and 207 to 209 (HLY). Asp-169 serves as a coordination point for (6R)-5,10-methylene-5,6,7,8-tetrahydrofolate. Ala-263 contributes to the (6R)-5,10-methylene-5,6,7,8-tetrahydrofolate binding site.

This sequence belongs to the thymidylate synthase family. Bacterial-type ThyA subfamily. Homodimer.

Its subcellular location is the cytoplasm. It carries out the reaction dUMP + (6R)-5,10-methylene-5,6,7,8-tetrahydrofolate = 7,8-dihydrofolate + dTMP. It participates in pyrimidine metabolism; dTTP biosynthesis. Catalyzes the reductive methylation of 2'-deoxyuridine-5'-monophosphate (dUMP) to 2'-deoxythymidine-5'-monophosphate (dTMP) while utilizing 5,10-methylenetetrahydrofolate (mTHF) as the methyl donor and reductant in the reaction, yielding dihydrofolate (DHF) as a by-product. This enzymatic reaction provides an intracellular de novo source of dTMP, an essential precursor for DNA biosynthesis. This chain is Thymidylate synthase, found in Azoarcus sp. (strain BH72).